Reading from the N-terminus, the 398-residue chain is ORC1-type DNA replication protein 1 (398 aa).

ATP-binding positions include 67–71 (TGKTA), Tyr208, and Arg220.

The protein belongs to the CDC6/cdc18 family.

Involved in regulation of DNA replication. In Sulfurisphaera tokodaii (strain DSM 16993 / JCM 10545 / NBRC 100140 / 7) (Sulfolobus tokodaii), this protein is ORC1-type DNA replication protein 1 (cdc6-1).